A 320-amino-acid polypeptide reads, in one-letter code: Protein LATERAL ROOT PRIMORDIUM 1 (320 aa).

The segment at 90 to 110 is disordered; sequence QTTVGTSSNNSGSGSGASGTA. Residues C112, C115, C123, C128, C132, and C139 each contribute to the Zn(2+) site. Residues 112-139 constitute a DNA-binding region (zn(2)-C6 fungal-type; degenerate); the sequence is CQDCGNQAKKECKQRRCRTCCKSRGFDC. The segment at 150-223 is disordered; that stretch reads AARRRERQVM…QDGGGSREAW (74 aa). The span at 168-177 shows a compositional bias: low complexity; sequence GSSLSTSSGT. The span at 193 to 214 shows a compositional bias: polar residues; the sequence is ATSHTSTSNTPPQSFETSSSRQ. The Required for homo- and heterodimerization signature appears at 256 to 259; that stretch reads IGGH.

This sequence belongs to the SHI protein family. Homodimer. As to expression, restricted to lateral root primordia.

It is found in the nucleus. Its function is as follows. Transcription activator that binds DNA on 5'-ACTCTAC-3' and promotes auxin homeostasis-regulating gene expression (e.g. YUC genes), as well as genes affecting stamen development, cell expansion and timing of flowering. Synergistically with other SHI-related proteins, regulates gynoecium, stamen and leaf development in a dose-dependent manner, controlling apical-basal patterning. Promotes style and stigma formation, and influence vascular development during gynoecium development. May also have a role in the formation and/or maintenance of the shoot apical meristem (SAM). Modulates root growth. The polypeptide is Protein LATERAL ROOT PRIMORDIUM 1 (LRP1) (Arabidopsis thaliana (Mouse-ear cress)).